The following is a 90-amino-acid chain: Probable oxaloacetate decarboxylase gamma chain 2 (90 aa).

A helical membrane pass occupies residues 10 to 32; that stretch reads GINLLTLGMGFVFIFLIFLVYAT.

This sequence belongs to the OadG family. Heterotrimer of an alpha, a beta and a gamma subunit. Na(+) serves as cofactor.

Its subcellular location is the cell membrane. The enzyme catalyses oxaloacetate + 2 Na(+)(in) + H(+) = pyruvate + 2 Na(+)(out) + CO2. Catalyzes the decarboxylation of oxaloacetate coupled to Na(+) translocation. The polypeptide is Probable oxaloacetate decarboxylase gamma chain 2 (oadG2) (Vibrio cholerae serotype O1 (strain ATCC 39315 / El Tor Inaba N16961)).